Here is a 181-residue protein sequence, read N- to C-terminus: Large ribosomal subunit protein uL5 (181 aa).

This sequence belongs to the universal ribosomal protein uL5 family. As to quaternary structure, part of the 50S ribosomal subunit; part of the 5S rRNA/L5/L18/L25 subcomplex. Contacts the 5S rRNA and the P site tRNA. Forms a bridge to the 30S subunit in the 70S ribosome.

Functionally, this is one of the proteins that bind and probably mediate the attachment of the 5S RNA into the large ribosomal subunit, where it forms part of the central protuberance. In the 70S ribosome it contacts protein S13 of the 30S subunit (bridge B1b), connecting the 2 subunits; this bridge is implicated in subunit movement. Contacts the P site tRNA; the 5S rRNA and some of its associated proteins might help stabilize positioning of ribosome-bound tRNAs. This is Large ribosomal subunit protein uL5 from Sulfurimonas denitrificans (strain ATCC 33889 / DSM 1251) (Thiomicrospira denitrificans (strain ATCC 33889 / DSM 1251)).